Consider the following 232-residue polypeptide: Small ribosomal subunit protein uS3 (232 aa).

Residues 39 to 107 (IRKFLKKELF…DVAINIKEEK (69 aa)) form the KH type-2 domain. Residues 213 to 232 (QPEPAEEKKGGRRPSRKRGE) form a disordered region. Residues 222–232 (GGRRPSRKRGE) show a composition bias toward basic residues.

Belongs to the universal ribosomal protein uS3 family. Part of the 30S ribosomal subunit. Forms a tight complex with proteins S10 and S14.

In terms of biological role, binds the lower part of the 30S subunit head. Binds mRNA in the 70S ribosome, positioning it for translation. This Sulfurovum sp. (strain NBC37-1) protein is Small ribosomal subunit protein uS3.